The following is a 378-amino-acid chain: Erythronate-4-phosphate dehydrogenase (378 aa).

Positions 45 and 66 each coordinate substrate. Positions 146 and 175 each coordinate NAD(+). The active site involves Arg208. Asp232 provides a ligand contact to NAD(+). Glu237 is an active-site residue. The active-site Proton donor is His254. Residue Gly257 participates in NAD(+) binding. Tyr258 contacts substrate.

Belongs to the D-isomer specific 2-hydroxyacid dehydrogenase family. PdxB subfamily. In terms of assembly, homodimer.

Its subcellular location is the cytoplasm. The enzyme catalyses 4-phospho-D-erythronate + NAD(+) = (R)-3-hydroxy-2-oxo-4-phosphooxybutanoate + NADH + H(+). It functions in the pathway cofactor biosynthesis; pyridoxine 5'-phosphate biosynthesis; pyridoxine 5'-phosphate from D-erythrose 4-phosphate: step 2/5. Catalyzes the oxidation of erythronate-4-phosphate to 3-hydroxy-2-oxo-4-phosphonooxybutanoate. The chain is Erythronate-4-phosphate dehydrogenase from Escherichia coli O17:K52:H18 (strain UMN026 / ExPEC).